The following is a 226-amino-acid chain: NADH-quinone oxidoreductase subunit B 2 (226 aa).

Residues C37, C38, C103, and C132 each coordinate [4Fe-4S] cluster.

This sequence belongs to the complex I 20 kDa subunit family. As to quaternary structure, NDH-1 is composed of 14 different subunits. Subunits NuoB, C, D, E, F, and G constitute the peripheral sector of the complex. [4Fe-4S] cluster serves as cofactor.

It is found in the cell membrane. It catalyses the reaction a quinone + NADH + 5 H(+)(in) = a quinol + NAD(+) + 4 H(+)(out). Its function is as follows. NDH-1 shuttles electrons from NADH, via FMN and iron-sulfur (Fe-S) centers, to quinones in the respiratory chain. The immediate electron acceptor for the enzyme in this species is believed to be a menaquinone. Couples the redox reaction to proton translocation (for every two electrons transferred, four hydrogen ions are translocated across the cytoplasmic membrane), and thus conserves the redox energy in a proton gradient. The chain is NADH-quinone oxidoreductase subunit B 2 from Salinispora arenicola (strain CNS-205).